A 496-amino-acid chain; its full sequence is ATP synthase subunit beta (496 aa).

Position 155–162 (155–162 (GGAGVGKT)) interacts with ATP.

The protein belongs to the ATPase alpha/beta chains family. As to quaternary structure, F-type ATPases have 2 components, CF(1) - the catalytic core - and CF(0) - the membrane proton channel. CF(1) has five subunits: alpha(3), beta(3), gamma(1), delta(1), epsilon(1). CF(0) has three main subunits: a(1), b(2) and c(9-12). The alpha and beta chains form an alternating ring which encloses part of the gamma chain. CF(1) is attached to CF(0) by a central stalk formed by the gamma and epsilon chains, while a peripheral stalk is formed by the delta and b chains.

It is found in the cell membrane. It carries out the reaction ATP + H2O + 4 H(+)(in) = ADP + phosphate + 5 H(+)(out). Its function is as follows. Produces ATP from ADP in the presence of a proton gradient across the membrane. The catalytic sites are hosted primarily by the beta subunits. The chain is ATP synthase subunit beta from Karelsulcia muelleri (strain GWSS) (Sulcia muelleri).